A 338-amino-acid polypeptide reads, in one-letter code: Increasing suppression factor 1 (338 aa).

Residues 50–70 are compositionally biased toward low complexity; that stretch reads ENSSKSNNSHHSSSTNAGNTS. A disordered region spans residues 50–72; the sequence is ENSSKSNNSHHSSSTNAGNTSRH. Serine 119 bears the Phosphoserine mark. Residues 267–306 are compositionally biased toward low complexity; the sequence is SLLSNGSSSSPLQTRNNSYSNSLVKSPSNSSLNTSVASSN. Positions 267–322 are disordered; that stretch reads SLLSNGSSSSPLQTRNNSYSNSLVKSPSNSSLNTSVASSNEESSPHTSNCLEERNP. The span at 307–316 shows a compositional bias: polar residues; the sequence is EESSPHTSNC.

Belongs to the ISF1/MBR1 family.

In terms of biological role, could influence the NAM7/UPF1 function, possibly at the level of mRNA turnover. Participates in mitochondrial biogenesis. This is Increasing suppression factor 1 (ISF1) from Saccharomyces cerevisiae (strain JAY291) (Baker's yeast).